The sequence spans 482 residues: GDP-D-glucose phosphorylase 1 (482 aa).

Positions 1–21 (MEPFPRILDDRLPRNMRRPRP) are disordered. His255 functions as the Tele-GMP-histidine intermediate in the catalytic mechanism. The tract at residues 461 to 482 (MPRSPSIRHRSSTRAQSDEGSK) is disordered.

It belongs to the GDPGP1 family. As to expression, expressed throughout the neuronal system, in the spermatheca and anterior hypodermal cells.

The protein localises to the cytoplasm. It carries out the reaction GDP-alpha-D-glucose + phosphate = alpha-D-glucose 1-phosphate + GDP + H(+). Specific and highly efficient GDP-D-glucose phosphorylase regulating the levels of GDP-D-glucose in cells. This chain is GDP-D-glucose phosphorylase 1, found in Caenorhabditis elegans.